The chain runs to 378 residues: Probable selenide, water dikinase (378 aa).

The active site involves cysteine 33. Residues lysine 36, 63–65 (GLD), aspartate 83, aspartate 106, and 158–160 (GQT) each bind ATP. Residue aspartate 65 coordinates Mg(2+). Aspartate 106 is a Mg(2+) binding site. A Mg(2+)-binding site is contributed by aspartate 260.

The protein belongs to the selenophosphate synthase 1 family. Class I subfamily. As to quaternary structure, homodimer. It depends on Mg(2+) as a cofactor.

The catalysed reaction is hydrogenselenide + ATP + H2O = selenophosphate + AMP + phosphate + 2 H(+). Functionally, synthesizes selenophosphate from selenide and ATP. In Caenorhabditis elegans, this protein is Probable selenide, water dikinase (seld-1).